Consider the following 92-residue polypeptide: Small ribosomal subunit protein uS19c (92 aa).

The protein belongs to the universal ribosomal protein uS19 family.

The protein resides in the plastid. Its subcellular location is the chloroplast. Functionally, protein S19 forms a complex with S13 that binds strongly to the 16S ribosomal RNA. This chain is Small ribosomal subunit protein uS19c, found in Lemna minor (Common duckweed).